Consider the following 118-residue polypeptide: Ig heavy chain V region AC38 205.12 (118 aa).

Residues 1 to 98 (EVQLQQSGPE…EDSAVYYCAR (98 aa)) are v segment. Residues cysteine 22 and cysteine 96 are joined by a disulfide bond. The d segment stretch occupies residues 99-104 (GYGYDP). Positions 105–118 (FDVWGTGTTVTVSS) are j segment.

This is Ig heavy chain V region AC38 205.12 from Mus musculus (Mouse).